We begin with the raw amino-acid sequence, 108 residues long: uncharacterized protein (108 aa).

Over residues 1-10 (MSGISLTPVK) the composition is skewed to polar residues. Disordered stretches follow at residues 1-63 (MSGI…RPPR) and 83-108 (VLSP…PRTQ). A compositionally biased stretch (basic and acidic residues) spans 33-62 (YVDRARPSADAKEHCAASDPEEWHSGDRPP).

This is an uncharacterized protein from Gallid herpesvirus 2 (strain Chicken/Md5/ATCC VR-987) (GaHV-2).